The chain runs to 246 residues: 3-deoxy-manno-octulosonate cytidylyltransferase (246 aa).

Belongs to the KdsB family.

It localises to the cytoplasm. The enzyme catalyses 3-deoxy-alpha-D-manno-oct-2-ulosonate + CTP = CMP-3-deoxy-beta-D-manno-octulosonate + diphosphate. The protein operates within nucleotide-sugar biosynthesis; CMP-3-deoxy-D-manno-octulosonate biosynthesis; CMP-3-deoxy-D-manno-octulosonate from 3-deoxy-D-manno-octulosonate and CTP: step 1/1. It participates in bacterial outer membrane biogenesis; lipopolysaccharide biosynthesis. Activates KDO (a required 8-carbon sugar) for incorporation into bacterial lipopolysaccharide in Gram-negative bacteria. This is 3-deoxy-manno-octulosonate cytidylyltransferase from Bradyrhizobium sp. (strain BTAi1 / ATCC BAA-1182).